The primary structure comprises 134 residues: Ribosome-binding factor A (134 aa).

The protein belongs to the RbfA family. Monomer. Binds 30S ribosomal subunits, but not 50S ribosomal subunits or 70S ribosomes.

Its subcellular location is the cytoplasm. One of several proteins that assist in the late maturation steps of the functional core of the 30S ribosomal subunit. Associates with free 30S ribosomal subunits (but not with 30S subunits that are part of 70S ribosomes or polysomes). Required for efficient processing of 16S rRNA. May interact with the 5'-terminal helix region of 16S rRNA. In Bdellovibrio bacteriovorus (strain ATCC 15356 / DSM 50701 / NCIMB 9529 / HD100), this protein is Ribosome-binding factor A.